Here is a 282-residue protein sequence, read N- to C-terminus: Glutamate racemase (282 aa).

Substrate contacts are provided by residues 13 to 14 and 45 to 46; these read DS and YG. Cys-76 serves as the catalytic Proton donor/acceptor. Residue 77-78 coordinates substrate; it reads NT. Cys-186 serves as the catalytic Proton donor/acceptor. Residue 187 to 188 participates in substrate binding; that stretch reads TH.

Belongs to the aspartate/glutamate racemases family.

It catalyses the reaction L-glutamate = D-glutamate. Its pathway is cell wall biogenesis; peptidoglycan biosynthesis. Its function is as follows. Provides the (R)-glutamate required for cell wall biosynthesis. This Ralstonia pickettii (strain 12J) protein is Glutamate racemase.